A 1095-amino-acid chain; its full sequence is DNA polymerase delta catalytic subunit (1095 aa).

Positions 1 to 11 (MNRSGISKKRP) are enriched in basic residues. Residues 1–37 (MNRSGISKKRPPPSNTPPPAGKHRATGDSTPSPAIGT) form a disordered region. Zn(2+)-binding residues include cysteine 1007, cysteine 1010, cysteine 1020, and cysteine 1023. Residues 1007–1023 (CVGCKVPISNGTLCASC) form a CysA-type zinc finger. [4Fe-4S] cluster contacts are provided by cysteine 1052, cysteine 1055, cysteine 1065, and cysteine 1070. The short motif at 1052–1070 (CQECQGSLHQDVLCTSRDC) is the CysB motif element.

It belongs to the DNA polymerase type-B family. Heterodimer with subunits of 125 kDa and 50 kDa. The 125 kDa subunit contains the polymerase active site and most likely the active site for the 3'-5' exonuclease activity. It depends on [4Fe-4S] cluster as a cofactor.

The protein localises to the nucleus. It catalyses the reaction DNA(n) + a 2'-deoxyribonucleoside 5'-triphosphate = DNA(n+1) + diphosphate. In terms of biological role, this polymerase possesses two enzymatic activities: DNA synthesis (polymerase) and an exonucleolytic activity that degrades single-stranded DNA in the 3'- to 5'-direction. The chain is DNA polymerase delta catalytic subunit (POLD1) from Arabidopsis thaliana (Mouse-ear cress).